The following is a 120-amino-acid chain: NAD(P)H-quinone oxidoreductase subunit 3, chloroplastic (120 aa).

Transmembrane regions (helical) follow at residues 9–29 (IFWT…SISG), 64–84 (MFAL…PWAM), and 88–108 (VLGV…VVGL).

Belongs to the complex I subunit 3 family. As to quaternary structure, NDH is composed of at least 16 different subunits, 5 of which are encoded in the nucleus.

The protein resides in the plastid. Its subcellular location is the chloroplast thylakoid membrane. It carries out the reaction a plastoquinone + NADH + (n+1) H(+)(in) = a plastoquinol + NAD(+) + n H(+)(out). It catalyses the reaction a plastoquinone + NADPH + (n+1) H(+)(in) = a plastoquinol + NADP(+) + n H(+)(out). Its function is as follows. NDH shuttles electrons from NAD(P)H:plastoquinone, via FMN and iron-sulfur (Fe-S) centers, to quinones in the photosynthetic chain and possibly in a chloroplast respiratory chain. The immediate electron acceptor for the enzyme in this species is believed to be plastoquinone. Couples the redox reaction to proton translocation, and thus conserves the redox energy in a proton gradient. This chain is NAD(P)H-quinone oxidoreductase subunit 3, chloroplastic, found in Hordeum vulgare (Barley).